A 455-amino-acid polypeptide reads, in one-letter code: MYVQDTIAAISTPTGEGGVGIIRVSGRHVLSIADAIFKRNRDGGLQSHRFYYGAIIDPVSADCLDEVMVVFMKGPHSYTREDVLEIQCHGGYLVVQRILDLVLQQGTRLAGPGEFTKRAFLNGRIDLVQAEAIIDVIRSKTEKSLALAQHQREGLLSQRIARVKDGIVSSLALIEAFIDFPEEDIDVLGIQQVGAHVDCSLTELETLLAGFNEGKVLRDGVSVVIAGKPNVGKSSLLNTLLREKRAIVTSVPGTTRDLIEEVVTIKGLPVKLLDTAGIRESDDRVEREGIKLSLDKIPSADLVLFIIDSSLPFSSEDQAILDVLAPCNFIVVMNKSDICRSFDMPQLPDVPIIAVSTLTGDGIDALQDAIFEAFIHNHAVDSREYVAVSQARHRDALQKSRDALLRFRGNLVAGMELDLLAIDLRDALSAIGEVTGETTADDVLDLIFQRFCIGK.

Arg23, Glu85, and Arg124 together coordinate (6S)-5-formyl-5,6,7,8-tetrahydrofolate. Positions 220 to 375 constitute a TrmE-type G domain; that stretch reads GVSVVIAGKP…LQDAIFEAFI (156 aa). A K(+)-binding site is contributed by Asn230. GTP-binding positions include 230–235, 249–255, and 274–277; these read NVGKSS, TSVPGTT, and DTAG. Mg(2+) is bound at residue Ser234. The K(+) site is built by Thr249, Val251, and Thr254. Thr255 contacts Mg(2+). Lys455 serves as a coordination point for (6S)-5-formyl-5,6,7,8-tetrahydrofolate.

Belongs to the TRAFAC class TrmE-Era-EngA-EngB-Septin-like GTPase superfamily. TrmE GTPase family. In terms of assembly, homodimer. Heterotetramer of two MnmE and two MnmG subunits. K(+) is required as a cofactor.

It is found in the cytoplasm. In terms of biological role, exhibits a very high intrinsic GTPase hydrolysis rate. Involved in the addition of a carboxymethylaminomethyl (cmnm) group at the wobble position (U34) of certain tRNAs, forming tRNA-cmnm(5)s(2)U34. The polypeptide is tRNA modification GTPase MnmE (Geotalea uraniireducens (strain Rf4) (Geobacter uraniireducens)).